The primary structure comprises 233 residues: ATP synthase subunit a, chloroplastic (233 aa).

4 helical membrane-spanning segments follow: residues 27–47, 84–104, 122–142, and 192–212; these read VLLITWLVLAIILTLAILGTL, VPFVGTLFLFIFVANWLGALI, DINTTVALSLLTSISYFYAGF, and VLCLLVPLLIPLPVMVLGIFA.

This sequence belongs to the ATPase A chain family. As to quaternary structure, F-type ATPases have 2 components, CF(1) - the catalytic core - and CF(0) - the membrane proton channel. CF(1) has five subunits: alpha(3), beta(3), gamma(1), delta(1), epsilon(1). CF(0) has four main subunits: a, b, b' and c.

It localises to the plastid. It is found in the chloroplast thylakoid membrane. Its function is as follows. Key component of the proton channel; it plays a direct role in the translocation of protons across the membrane. In Ochrosphaera neapolitana, this protein is ATP synthase subunit a, chloroplastic.